The following is a 130-amino-acid chain: Small ribosomal subunit protein uS8 (130 aa).

Belongs to the universal ribosomal protein uS8 family. In terms of assembly, part of the 30S ribosomal subunit. Contacts proteins S5 and S12.

Its function is as follows. One of the primary rRNA binding proteins, it binds directly to 16S rRNA central domain where it helps coordinate assembly of the platform of the 30S subunit. In Shewanella sediminis (strain HAW-EB3), this protein is Small ribosomal subunit protein uS8.